A 173-amino-acid polypeptide reads, in one-letter code: NADH-ubiquinone oxidoreductase chain 6 (173 aa).

5 consecutive transmembrane segments (helical) span residues 1–21, 27–47, 48–68, 87–107, and 139–159; these read MTYFMFFLGLCFVLGGLAVAS, YGVVGLVLASVAGCGWLLSLG, ISFVSLVLFMVYLGGMLVVFV, VIGYGAGFVGVLMVGMVIGGF, and CGVGMFLVAGWGLLLTLFVVL.

The protein belongs to the complex I subunit 6 family.

It localises to the mitochondrion membrane. The enzyme catalyses a ubiquinone + NADH + 5 H(+)(in) = a ubiquinol + NAD(+) + 4 H(+)(out). Its function is as follows. Core subunit of the mitochondrial membrane respiratory chain NADH dehydrogenase (Complex I) that is believed to belong to the minimal assembly required for catalysis. Complex I functions in the transfer of electrons from NADH to the respiratory chain. The immediate electron acceptor for the enzyme is believed to be ubiquinone. This is NADH-ubiquinone oxidoreductase chain 6 (MT-ND6) from Alca torda (Razorbill).